We begin with the raw amino-acid sequence, 181 residues long: Large ribosomal subunit protein uL6 (181 aa).

This sequence belongs to the universal ribosomal protein uL6 family. In terms of assembly, part of the 50S ribosomal subunit.

This protein binds to the 23S rRNA, and is important in its secondary structure. It is located near the subunit interface in the base of the L7/L12 stalk, and near the tRNA binding site of the peptidyltransferase center. The protein is Large ribosomal subunit protein uL6 of Lawsonia intracellularis (strain PHE/MN1-00).